The chain runs to 260 residues: Thiazole synthase (260 aa).

Catalysis depends on K102, which acts as the Schiff-base intermediate with DXP. 1-deoxy-D-xylulose 5-phosphate contacts are provided by residues G163, 189 to 190, and 211 to 212; these read AG and NT.

It belongs to the ThiG family. In terms of assembly, homotetramer. Forms heterodimers with either ThiH or ThiS.

It is found in the cytoplasm. It catalyses the reaction [ThiS sulfur-carrier protein]-C-terminal-Gly-aminoethanethioate + 2-iminoacetate + 1-deoxy-D-xylulose 5-phosphate = [ThiS sulfur-carrier protein]-C-terminal Gly-Gly + 2-[(2R,5Z)-2-carboxy-4-methylthiazol-5(2H)-ylidene]ethyl phosphate + 2 H2O + H(+). It participates in cofactor biosynthesis; thiamine diphosphate biosynthesis. Functionally, catalyzes the rearrangement of 1-deoxy-D-xylulose 5-phosphate (DXP) to produce the thiazole phosphate moiety of thiamine. Sulfur is provided by the thiocarboxylate moiety of the carrier protein ThiS. In vitro, sulfur can be provided by H(2)S. This is Thiazole synthase from Citrifermentans bemidjiense (strain ATCC BAA-1014 / DSM 16622 / JCM 12645 / Bem) (Geobacter bemidjiensis).